Here is a 190-residue protein sequence, read N- to C-terminus: GTP cyclohydrolase 1 (190 aa).

Positions 80, 83, and 151 each coordinate Zn(2+).

The protein belongs to the GTP cyclohydrolase I family. In terms of assembly, toroid-shaped homodecamer, composed of two pentamers of five dimers.

The catalysed reaction is GTP + H2O = 7,8-dihydroneopterin 3'-triphosphate + formate + H(+). The protein operates within cofactor biosynthesis; 7,8-dihydroneopterin triphosphate biosynthesis; 7,8-dihydroneopterin triphosphate from GTP: step 1/1. The sequence is that of GTP cyclohydrolase 1 from Rickettsia typhi (strain ATCC VR-144 / Wilmington).